Reading from the N-terminus, the 477-residue chain is Ribulose bisphosphate carboxylase large chain (477 aa).

The propeptide occupies 1–2; sequence MS. An N-acetylproline modification is found at Pro-3. Residue Lys-14 is modified to N6,N6,N6-trimethyllysine. Residues Asn-123 and Thr-173 each coordinate substrate. Lys-175 (proton acceptor) is an active-site residue. Lys-177 is a substrate binding site. Lys-201, Asp-203, and Glu-204 together coordinate Mg(2+). An N6-carboxylysine modification is found at Lys-201. His-294 serves as the catalytic Proton acceptor. The substrate site is built by Arg-295, His-327, and Ser-379.

Belongs to the RuBisCO large chain family. Type I subfamily. Heterohexadecamer of 8 large chains and 8 small chains; disulfide-linked. The disulfide link is formed within the large subunit homodimers. The cofactor is Mg(2+). Post-translationally, the disulfide bond which can form in the large chain dimeric partners within the hexadecamer appears to be associated with oxidative stress and protein turnover.

The protein localises to the plastid. The enzyme catalyses 2 (2R)-3-phosphoglycerate + 2 H(+) = D-ribulose 1,5-bisphosphate + CO2 + H2O. The catalysed reaction is D-ribulose 1,5-bisphosphate + O2 = 2-phosphoglycolate + (2R)-3-phosphoglycerate + 2 H(+). Functionally, ruBisCO catalyzes two reactions: the carboxylation of D-ribulose 1,5-bisphosphate, the primary event in carbon dioxide fixation, as well as the oxidative fragmentation of the pentose substrate in the photorespiration process. Both reactions occur simultaneously and in competition at the same active site. The sequence is that of Ribulose bisphosphate carboxylase large chain (rbcL) from Lathraea clandestina (Purple toothwort).